We begin with the raw amino-acid sequence, 61 residues long: Large ribosomal subunit protein bL32 (61 aa).

Positions 1–16 (MPTPKKKTSRSKRDMR) are enriched in basic residues. A disordered region spans residues 1–47 (MPTPKKKTSRSKRDMRRSHDGLTAPAIAVEKKTGELVRPHRAHKGAD). Basic and acidic residues predominate over residues 29–38 (VEKKTGELVR).

This sequence belongs to the bacterial ribosomal protein bL32 family.

The sequence is that of Large ribosomal subunit protein bL32 from Bdellovibrio bacteriovorus (strain ATCC 15356 / DSM 50701 / NCIMB 9529 / HD100).